A 59-amino-acid chain; its full sequence is Chromatin protein Cren7 (59 aa).

The protein belongs to the Cren7 family. In terms of assembly, monomer. In terms of processing, methylated at multiple sites, to varying extents.

The protein resides in the chromosome. It localises to the cytoplasm. In terms of biological role, a chromatin protein, binds double-stranded DNA without sequence specificity. Constrains negative DNA supercoils. This is Chromatin protein Cren7 from Sulfolobus acidocaldarius (strain ATCC 33909 / DSM 639 / JCM 8929 / NBRC 15157 / NCIMB 11770).